A 508-amino-acid chain; its full sequence is Histidine ammonia-lyase (508 aa).

Positions 143–145 form a cross-link, 5-imidazolinone (Ala-Gly); sequence ASG. Ser144 carries the 2,3-didehydroalanine (Ser) modification.

This sequence belongs to the PAL/histidase family. In terms of processing, contains an active site 4-methylidene-imidazol-5-one (MIO), which is formed autocatalytically by cyclization and dehydration of residues Ala-Ser-Gly.

It is found in the cytoplasm. The catalysed reaction is L-histidine = trans-urocanate + NH4(+). It participates in amino-acid degradation; L-histidine degradation into L-glutamate; N-formimidoyl-L-glutamate from L-histidine: step 1/3. This chain is Histidine ammonia-lyase, found in Caldanaerobacter subterraneus subsp. tengcongensis (strain DSM 15242 / JCM 11007 / NBRC 100824 / MB4) (Thermoanaerobacter tengcongensis).